The sequence spans 238 residues: Ribonuclease PH (238 aa).

Phosphate contacts are provided by residues R86 and 124 to 126; that span reads GTR.

The protein belongs to the RNase PH family. In terms of assembly, homohexameric ring arranged as a trimer of dimers.

The catalysed reaction is tRNA(n+1) + phosphate = tRNA(n) + a ribonucleoside 5'-diphosphate. In terms of biological role, phosphorolytic 3'-5' exoribonuclease that plays an important role in tRNA 3'-end maturation. Removes nucleotide residues following the 3'-CCA terminus of tRNAs; can also add nucleotides to the ends of RNA molecules by using nucleoside diphosphates as substrates, but this may not be physiologically important. Probably plays a role in initiation of 16S rRNA degradation (leading to ribosome degradation) during starvation. This chain is Ribonuclease PH, found in Mesorhizobium japonicum (strain LMG 29417 / CECT 9101 / MAFF 303099) (Mesorhizobium loti (strain MAFF 303099)).